The primary structure comprises 201 residues: NADH-ubiquinone oxidoreductase 21.3 kDa subunit (201 aa).

As to quaternary structure, complex I is composed of about 40 different subunits.

The protein resides in the mitochondrion inner membrane. It carries out the reaction a ubiquinone + NADH + 5 H(+)(in) = a ubiquinol + NAD(+) + 4 H(+)(out). Its function is as follows. Transfer of electrons from NADH to the respiratory chain. The immediate electron acceptor for the enzyme is believed to be ubiquinone. This chain is NADH-ubiquinone oxidoreductase 21.3 kDa subunit, found in Neurospora crassa (strain ATCC 24698 / 74-OR23-1A / CBS 708.71 / DSM 1257 / FGSC 987).